The sequence spans 329 residues: uncharacterized protein (329 aa).

To type I restriction system adenine methylases.

This is an uncharacterized protein from Bacillus subtilis (strain 168).